The chain runs to 143 residues: Interleukin-3 (143 aa).

A signal peptide spans 1–19 (MSRLPVLLLLHLLVSPGLQ). C35 and C103 are disulfide-bonded. N89 carries an N-linked (GlcNAc...) asparagine glycan.

This sequence belongs to the IL-3 family. As to quaternary structure, monomer. In terms of tissue distribution, activated T-cells, mast cells, natural killer cells.

The protein resides in the secreted. In terms of biological role, granulocyte/macrophage colony-stimulating factors are cytokines that act in hematopoiesis by controlling the production, differentiation, and function of 2 related white cell populations of the blood, the granulocytes and the monocytes-macrophages. Functionally, this CSF induces granulocytes, macrophages, mast cells, stem cells, erythroid cells, eosinophils and megakaryocytes. This chain is Interleukin-3 (IL3), found in Macaca mulatta (Rhesus macaque).